Consider the following 71-residue polypeptide: MFDYLENEEVALDELKQMLRDRDPNDTRNQFKNNALHAYLFNEHCNNVEVVKLLLDSGTNPLRKNWRQLPH.

This is an uncharacterized protein from Vaccinia virus (strain Western Reserve) (VACV).